Consider the following 472-residue polypeptide: Methanethiol oxidase (472 aa).

Belongs to the selenium-binding protein family.

The protein resides in the nucleus. It localises to the cytoplasm. The protein localises to the cytosol. It is found in the membrane. It carries out the reaction methanethiol + O2 + H2O = hydrogen sulfide + formaldehyde + H2O2 + H(+). The protein operates within organosulfur degradation. Catalyzes the oxidation of methanethiol, an organosulfur compound known to be produced in substantial amounts by gut bacteria. Selenium-binding protein which may be involved in the sensing of reactive xenobiotics in the cytoplasm. May be involved in intra-Golgi protein transport. The chain is Methanethiol oxidase (selenbp1-b) from Xenopus laevis (African clawed frog).